Consider the following 322-residue polypeptide: Dioxygenase himG (322 aa).

Fe cation-binding residues include His148 and His229.

The protein belongs to the PhyH family. In terms of assembly, homodimer. Fe cation serves as cofactor.

It participates in secondary metabolite biosynthesis. Functionally, polyketide synthase-nonribosomal peptide synthetase; part of the him gene cluster that mediates the biosynthesis of himeic acid A, a ubiquitin-activating enzyme (E1) inhibitor. First, himA, together with the trans-enoyl reductase himH, catalyzes the formation of apolyketide chain, which is then condensed with leucine by the NRPS activity of himA. Dieckmann cyclization and release from himA gives a tetramic acid intermediate as the product of himA PKS-NRPS. HimG then catalyzes alpha-oxidation of the tetramic acid ring, with a subsequent rearrangement to yield apyrone intermediate. Two terminal methyl groups of polyketide and amide side chains are oxidized to carboxylic acids by himC cytochrome P450 monooxygenase to form himeic acid A. Himeic acid A is further converted to himeic acid B and C during culture growth. No gene responsible for pyrone to pyridone conversion was found in the him gene cluster and himeic acid A is non-enzymatically converted to himeic acid C by the incorporation of an ammonium nitrogen atom in a pH5 buffer, and to himeic acid B at a conversion ratio of 50% during incubation in MeOH for 5 days. This is Dioxygenase himG from Aspergillus japonicus.